Here is a 214-residue protein sequence, read N- to C-terminus: Osteoclast-stimulating factor 1 (214 aa).

Ser2 is subject to N-acetylserine. Residues 12 to 71 (GQVKVFRALYTFEPRTPDELYFEEGDIIYITDMSDTNWWKGTCKGRTGLIPSNYVAEQAE) form the SH3 domain. ANK repeat units lie at residues 72–101 (SIDN…GVNG), 105–135 (AGST…ELNQ), and 139–168 (LGDT…RTDL). Phosphoserine occurs at positions 202 and 213.

In terms of assembly, interacts with SRC and SMN1. Interacts with FASLG.

The protein localises to the cytoplasm. Functionally, induces bone resorption, acting probably through a signaling cascade which results in the secretion of factor(s) enhancing osteoclast formation and activity. This chain is Osteoclast-stimulating factor 1 (OSTF1), found in Bos taurus (Bovine).